The primary structure comprises 469 residues: Citrate synthase, mitochondrial (469 aa).

A mitochondrion-targeting transit peptide spans 1 to 30 (MSFLTVSRLAPKLLNSKNATYFLVAARNAS). Active-site residues include His-304 and His-350. An oxaloacetate-binding site is contributed by Arg-359. Residue Asp-405 is part of the active site. Oxaloacetate contacts are provided by Arg-431 and Arg-451.

Belongs to the citrate synthase family. In terms of assembly, homodimer.

The protein resides in the mitochondrion matrix. It catalyses the reaction oxaloacetate + acetyl-CoA + H2O = citrate + CoA + H(+). It participates in carbohydrate metabolism; tricarboxylic acid cycle; isocitrate from oxaloacetate: step 1/2. Key enzyme of the Krebs tricarboxylic acid cycle which catalyzes the synthesis of citrate from acetyl coenzyme A and oxaloacetate. The polypeptide is Citrate synthase, mitochondrial (cs) (Xiphias gladius (Swordfish)).